Consider the following 396-residue polypeptide: Zinc metalloproteinase nas-19 (396 aa).

The first 20 residues, 1–20 (MVRLIHLIGAIILLFSYAYC), serve as a signal peptide directing secretion. In terms of domain architecture, Peptidase M12A spans 38 to 231 (RVKRQFERLG…YKINQYYGCW (194 aa)). The N-linked (GlcNAc...) asparagine glycan is linked to Asn-79. 4 disulfide bridges follow: Cys-82–Cys-230, Cys-105–Cys-130, Cys-232–Cys-252, and Cys-254–Cys-263. His-138 serves as a coordination point for Zn(2+). Glu-139 is an active-site residue. Positions 142 and 148 each coordinate Zn(2+). The 40-residue stretch at 225–264 (NQYYGCWCSKQLECKNGGYTSPSDCSRCNCPKGFFGNLCD) folds into the EGF-like domain. N-linked (GlcNAc...) asparagine glycosylation is present at Asn-310.

Zn(2+) serves as cofactor.

The protein resides in the secreted. Its function is as follows. Metalloprotease. The polypeptide is Zinc metalloproteinase nas-19 (nas-19) (Caenorhabditis elegans).